The following is a 163-amino-acid chain: Regulatory protein RecX (163 aa).

The tract at residues 1–21 is disordered; sequence MSDAEDIPTGRKRRPREQTPV.

This sequence belongs to the RecX family.

The protein localises to the cytoplasm. In terms of biological role, modulates RecA activity. This is Regulatory protein RecX from Stenotrophomonas maltophilia (strain K279a).